Reading from the N-terminus, the 454-residue chain is Protein pid-2 (454 aa).

Residues 31–61 (VQNNQKEHPPVQEIKTVSSKSKEHRVSSSRK) are disordered. Over residues 50–61 (KSKEHRVSSSRK) the composition is skewed to basic and acidic residues.

As to quaternary structure, may interact with pid-4, pid-5, app-1 and prmt-5. In terms of tissue distribution, expressed throughout the mitotic and meiotic regions of the germline and in oocytes.

Its subcellular location is the cytoplasm. It localises to the perinuclear region. The protein resides in the cytoplasmic granule. Involved in gene silencing mediated by a class of 21 nucleotide PIWI-interacting RNAs (piRNAs) that possess a uracil residue at the 5'-end (also called 21U-RNAs) and that guide the Piwi protein prg-1 to its DNA targets for silencing. Not required for the biogenesis of 21U-RNAs. May also be involved in gene silencing mediated by 22G-siRNAs (a class of 22 nucleotide endogenous small interfering RNAs (siRNAs) that possess a triphosphorylated guanine residue at the 5'-end) and 26G-siRNAs (a class of 26 nucleotide siRNAs that possess a guanine residue at the 5'-end). Required for the biogenesis of secondary and tertiary 22G-siRNAs from many loci. Specifically, promotes the production of 22G-siRNAs from the 5' end of target mRNAs. May play a role in the production of 26G-siRNAs. Plays a role in small RNA-directed transgenerational epigenetic inheritance (also called RNAe) over several generations and germline immortality. Together with the argonaut protein hrde-1, promotes the silencing of the DNA transposable element Tc1. Required for the formation of liquid-like condensates in the cytoplasm called Z granules, playing a role in maintaining their assembly, viscosity and morphology in adult germ cells, and localization in early embryos. The sequence is that of Protein pid-2 from Caenorhabditis elegans.